The primary structure comprises 240 residues: Ribonuclease HII (240 aa).

Residues 29 to 220 enclose the RNase H type-2 domain; it reads EPIAGVDEAG…VRRAAGLEPL (192 aa). Residues Asp-35, Glu-36, and Asp-129 each coordinate a divalent metal cation.

The protein belongs to the RNase HII family. It depends on Mn(2+) as a cofactor. Mg(2+) is required as a cofactor.

It localises to the cytoplasm. It carries out the reaction Endonucleolytic cleavage to 5'-phosphomonoester.. Endonuclease that specifically degrades the RNA of RNA-DNA hybrids. This Nocardioides sp. (strain ATCC BAA-499 / JS614) protein is Ribonuclease HII.